A 194-amino-acid polypeptide reads, in one-letter code: uncharacterized protein (194 aa).

The HTH tetR-type domain maps to 6–66; that stretch reads SGKYEKILQA…AIAENLLTHT (61 aa). Positions 29-48 form a DNA-binding region, H-T-H motif; that stretch reads SISDIVKKAGTAQGTFYLYF.

This is an uncharacterized protein from Bacillus subtilis (strain 168).